The primary structure comprises 170 residues: Adenine phosphoribosyltransferase (170 aa).

Belongs to the purine/pyrimidine phosphoribosyltransferase family. In terms of assembly, homodimer.

The protein localises to the cytoplasm. The enzyme catalyses AMP + diphosphate = 5-phospho-alpha-D-ribose 1-diphosphate + adenine. It participates in purine metabolism; AMP biosynthesis via salvage pathway; AMP from adenine: step 1/1. Its function is as follows. Catalyzes a salvage reaction resulting in the formation of AMP, that is energically less costly than de novo synthesis. In Enterococcus faecalis (strain ATCC 700802 / V583), this protein is Adenine phosphoribosyltransferase.